Consider the following 254-residue polypeptide: Small ribosomal subunit protein uS2 (254 aa).

Residues 228–248 (RKERKGQDAEEELKKASEPKA) show a composition bias toward basic and acidic residues. Positions 228-254 (RKERKGQDAEEELKKASEPKAAEAAAE) are disordered.

It belongs to the universal ribosomal protein uS2 family.

The sequence is that of Small ribosomal subunit protein uS2 from Nitratidesulfovibrio vulgaris (strain ATCC 29579 / DSM 644 / CCUG 34227 / NCIMB 8303 / VKM B-1760 / Hildenborough) (Desulfovibrio vulgaris).